A 205-amino-acid chain; its full sequence is Ras-related protein Rab-1A (205 aa).

The residue at position 2 (serine 2) is an N-acetylserine. Serine 20, glycine 21, glycine 23, lysine 24, serine 25, cysteine 26, glutamate 38, and threonine 43 together coordinate GTP. Mg(2+) is bound at residue serine 25. The Switch 1 signature appears at 34–48; sequence DTYTESYISTIGVDF. A Mg(2+)-binding site is contributed by threonine 43. Residues lysine 49 and lysine 61 each participate in a glycyl lysine isopeptide (Lys-Gly) (interchain with G-Cter in ubiquitin) cross-link. Aspartate 66 serves as a coordination point for Mg(2+). Positions 66–83 match the Switch 2 motif; it reads DTAGQERFRTITSSYYRG. 6 residues coordinate GTP: glycine 69, asparagine 124, lysine 125, aspartate 127, alanine 155, and lysine 156. Positions 178–205 are disordered; it reads PGATAGGAEKSNVKIQSTPVKQSGGGCC. Serine 194 bears the Phosphoserine; by CDK1 mark. 2 S-geranylgeranyl cysteine lipidation sites follow: cysteine 204 and cysteine 205.

Belongs to the small GTPase superfamily. Rab family. As to quaternary structure, may interact with YIPF5. Interacts with C9orf72; the interaction mediates recruitment of RAB1A to the ATG1/ULK1 kinase complex. Interacts with GDI1; this promotes dissociation from membranes. Mg(2+) is required as a cofactor. Phosphorylated by CDK1 kinase during mitosis. In terms of processing, ubiquitinated via 'Lys-11'-linked ubiquitination on Lys-49 and Lys-61; impairing the recruitment of guanosine diphosphate (GDP) dissociation inhibitor 1/GDI1.

The protein resides in the golgi apparatus. Its subcellular location is the endoplasmic reticulum. The protein localises to the early endosome. It is found in the cytoplasm. It localises to the cytosol. The protein resides in the membrane. Its subcellular location is the melanosome. The catalysed reaction is GTP + H2O = GDP + phosphate + H(+). Its activity is regulated as follows. Regulated by guanine nucleotide exchange factors (GEFs) which promote the exchange of bound GDP for free GTP. Regulated by GTPase activating proteins (GAPs) which increase the GTP hydrolysis activity. Inhibited by GDP dissociation inhibitors (GDIs). The small GTPases Rab are key regulators of intracellular membrane trafficking, from the formation of transport vesicles to their fusion with membranes. Rabs cycle between an inactive GDP-bound form and an active GTP-bound form that is able to recruit to membranes different sets of downstream effectors directly responsible for vesicle formation, movement, tethering and fusion. RAB1A regulates vesicular protein transport from the endoplasmic reticulum (ER) to the Golgi compartment and on to the cell surface, and plays a role in IL-8 and growth hormone secretion. Required to modulate the compacted morphology of the Golgi. Regulates the level of CASR present at the cell membrane. Plays a role in cell adhesion and cell migration, via its role in protein trafficking. Plays a role in autophagosome assembly and cellular defense reactions against pathogenic bacteria. Plays a role in microtubule-dependent protein transport by early endosomes and in anterograde melanosome transport. In Sus scrofa (Pig), this protein is Ras-related protein Rab-1A (RAB1A).